Consider the following 133-residue polypeptide: MKDWLDEIHWNADGLVPAIAQDHKTGRILMMAWMNRESLALTVRENRAIYWSRSRGKLWRKGEESGHLQKVHEVRLDCDADVIVLQVEQLGGIACHTGRESCFYRVFEDGAWKVVEPILKDPDAIYHAGHRHE.

Mg(2+) is bound at residue aspartate 77. Position 78 (cysteine 78) interacts with Zn(2+). 2 residues coordinate Mg(2+): aspartate 79 and aspartate 81. Cysteine 95 and cysteine 102 together coordinate Zn(2+).

This sequence belongs to the PRA-CH family. In terms of assembly, homodimer. It depends on Mg(2+) as a cofactor. Requires Zn(2+) as cofactor.

Its subcellular location is the cytoplasm. It catalyses the reaction 1-(5-phospho-beta-D-ribosyl)-5'-AMP + H2O = 1-(5-phospho-beta-D-ribosyl)-5-[(5-phospho-beta-D-ribosylamino)methylideneamino]imidazole-4-carboxamide. It participates in amino-acid biosynthesis; L-histidine biosynthesis; L-histidine from 5-phospho-alpha-D-ribose 1-diphosphate: step 3/9. Its function is as follows. Catalyzes the hydrolysis of the adenine ring of phosphoribosyl-AMP. The chain is Phosphoribosyl-AMP cyclohydrolase from Azotobacter chroococcum mcd 1.